The primary structure comprises 246 residues: Granzyme H (246 aa).

An N-terminal signal peptide occupies residues 1–18; the sequence is MQPFLLLLAFLLTPGAGT. Residues 19-20 constitute a propeptide, activation peptide; it reads EE. Residues 21-244 form the Peptidase S1 domain; sequence IIGGHEAKPH…FLPWIKRTMK (224 aa). The interval 46-48 is mediates the preference for acidic residues at the P3' and P4' sites; it reads RKR. Cysteines 49 and 65 form a disulfide. Histidine 64 acts as the Charge relay system in catalysis. N-linked (GlcNAc...) asparagine glycosylation is found at asparagine 71 and asparagine 104. The active-site Charge relay system is the aspartate 108. Cystine bridges form between cysteine 142-cysteine 208 and cysteine 172-cysteine 187. Asparagine 179 carries N-linked (GlcNAc...) asparagine glycosylation. Residue serine 202 is the Charge relay system of the active site.

This sequence belongs to the peptidase S1 family. Granzyme subfamily. Constitutively expressed in NK cells.

Its subcellular location is the cytolytic granule. Inhibited by SERPINB1. Functionally, cytotoxic chymotrypsin-like serine protease with preference for bulky and aromatic residues at the P1 position and acidic residues at the P3' and P4' sites. Probably necessary for target cell lysis in cell-mediated immune responses. Participates in the antiviral response via direct cleavage of several proteins essential for viral replication. In Homo sapiens (Human), this protein is Granzyme H (GZMH).